The sequence spans 437 residues: Chromosomal replication initiator protein DnaA (437 aa).

A domain I, interacts with DnaA modulators region spans residues 1–82 (MIFPIWKKCL…KIIINIEKKK (82 aa)). The tract at residues 82 to 101 (KLEKKKCIYKKKNIQIYLHS) is domain II. The tract at residues 102 to 318 (EINKKYQFHN…GILKKIQILS (217 aa)) is domain III, AAA+ region. 4 residues coordinate ATP: Gly-146, Gly-148, Lys-149, and Thr-150. Residues 319–437 (ILNKEKITIN…FIYLFNQLNA (119 aa)) are domain IV, binds dsDNA.

The protein belongs to the DnaA family. In terms of assembly, oligomerizes as a right-handed, spiral filament on DNA at oriC.

The protein resides in the cytoplasm. In terms of biological role, plays an essential role in the initiation and regulation of chromosomal replication. ATP-DnaA binds to the origin of replication (oriC) to initiate formation of the DNA replication initiation complex once per cell cycle. Binds the DnaA box (a 9 base pair repeat at the origin) and separates the double-stranded (ds)DNA. Forms a right-handed helical filament on oriC DNA; dsDNA binds to the exterior of the filament while single-stranded (ss)DNA is stabiized in the filament's interior. The ATP-DnaA-oriC complex binds and stabilizes one strand of the AT-rich DNA unwinding element (DUE), permitting loading of DNA polymerase. After initiation quickly degrades to an ADP-DnaA complex that is not apt for DNA replication. Binds acidic phospholipids. The polypeptide is Chromosomal replication initiator protein DnaA (Buchnera aphidicola subsp. Cinara cedri (strain Cc)).